A 194-amino-acid chain; its full sequence is Ribonuclease HII (194 aa).

An RNase H type-2 domain is found at 1–194; sequence MTVGVDEVGR…RLFPRDDGLR (194 aa). A divalent metal cation is bound by residues D6, E7, and D102.

It belongs to the RNase HII family. It depends on Mn(2+) as a cofactor. Mg(2+) is required as a cofactor.

Its subcellular location is the cytoplasm. It catalyses the reaction Endonucleolytic cleavage to 5'-phosphomonoester.. Endonuclease that specifically degrades the RNA of RNA-DNA hybrids. The chain is Ribonuclease HII from Synechococcus sp. (strain WH7803).